The primary structure comprises 633 residues: Extracellular metalloproteinase 3 (633 aa).

An N-terminal signal peptide occupies residues 1–18 (MHGLLLAGLLALPMNVLA). Positions 19–246 (HPAEHHASNV…VHNVVDYVAS (228 aa)) are excised as a propeptide. N-linked (GlcNAc...) asparagine glycans are attached at residues Asn-232 and Asn-410. His-429 is a binding site for Zn(2+). The active site involves Glu-430. His-433 contacts Zn(2+). Asn-480 and Asn-622 each carry an N-linked (GlcNAc...) asparagine glycan.

It belongs to the peptidase M36 family. The cofactor is Zn(2+).

The protein resides in the secreted. Its function is as follows. Secreted metalloproteinase that allows assimilation of proteinaceous substrates and probably acts as a virulence factor. This Arthroderma gypseum (strain ATCC MYA-4604 / CBS 118893) (Microsporum gypseum) protein is Extracellular metalloproteinase 3 (MEP3).